The primary structure comprises 238 residues: Small ribosomal subunit protein uS3 (238 aa).

The 69-residue stretch at 39–107 (MREFIHDYAK…ELHLNIVEIR (69 aa)) folds into the KH type-2 domain. Basic and acidic residues predominate over residues 212–222 (PQAHDRRHSEA). The segment at 212-238 (PQAHDRRHSEAQEGAAPRPPRRDRERA) is disordered.

This sequence belongs to the universal ribosomal protein uS3 family. Part of the 30S ribosomal subunit. Forms a tight complex with proteins S10 and S14.

Its function is as follows. Binds the lower part of the 30S subunit head. Binds mRNA in the 70S ribosome, positioning it for translation. This chain is Small ribosomal subunit protein uS3, found in Cereibacter sphaeroides (strain ATCC 17025 / ATH 2.4.3) (Rhodobacter sphaeroides).